A 461-amino-acid chain; its full sequence is ATP-dependent protease ATPase subunit HslU (461 aa).

ATP is bound by residues I18 and 60 to 65; that span reads GVGKTE. The segment at 157 to 178 is disordered; the sequence is EGSSVKPEPTAQQKESRQKMRK. Residues D273, E339, and R411 each contribute to the ATP site.

It belongs to the ClpX chaperone family. HslU subfamily. A double ring-shaped homohexamer of HslV is capped on each side by a ring-shaped HslU homohexamer. The assembly of the HslU/HslV complex is dependent on binding of ATP.

It is found in the cytoplasm. Its function is as follows. ATPase subunit of a proteasome-like degradation complex; this subunit has chaperone activity. The binding of ATP and its subsequent hydrolysis by HslU are essential for unfolding of protein substrates subsequently hydrolyzed by HslV. HslU recognizes the N-terminal part of its protein substrates and unfolds these before they are guided to HslV for hydrolysis. This is ATP-dependent protease ATPase subunit HslU from Magnetococcus marinus (strain ATCC BAA-1437 / JCM 17883 / MC-1).